The following is a 266-amino-acid chain: ATG8-interacting protein 2 (266 aa).

An AIM (Atg8-family-interacting motif) motif is present at residues 14-17 (WEVV). Residues 191 to 210 (TNTVWSICIAAAVMGIVILG) form a helical membrane-spanning segment. Residues 218-221 (WQIL) carry the AIM (Atg8-family-interacting motif) motif.

In terms of assembly, interacts with ATG8F.

The protein localises to the endoplasmic reticulum membrane. It localises to the membrane. Its function is as follows. May be involved in salt stress-induced vesicle-to-vacuole trafficking pathway. Through its interaction with ATG8F, may enable delivery of the vesicle bodies to the vacuole by an autophagic pathway. Plays a role in seed germination in response to exogenous abscisic acid (ABA) treatment. The protein is ATG8-interacting protein 2 of Arabidopsis thaliana (Mouse-ear cress).